We begin with the raw amino-acid sequence, 257 residues long: Transmembrane protein 101 (257 aa).

8 consecutive transmembrane segments (helical) span residues Val-21–Glu-40, Val-52–Gly-72, Trp-77–Gly-97, Tyr-110–Leu-130, Ser-139–Leu-159, Leu-182–Leu-202, Ile-206–His-226, and Phe-233–Leu-253.

The protein localises to the membrane. In terms of biological role, may activate NF-kappa-B signaling pathways. The chain is Transmembrane protein 101 (TMEM101) from Pongo abelii (Sumatran orangutan).